We begin with the raw amino-acid sequence, 256 residues long: Thiazole synthase (256 aa).

Residue Lys-95 is the Schiff-base intermediate with DXP of the active site. Residues Gly-156, 182-183 (AG), and 204-205 (NT) each bind 1-deoxy-D-xylulose 5-phosphate.

The protein belongs to the ThiG family. As to quaternary structure, homotetramer. Forms heterodimers with either ThiH or ThiS.

It localises to the cytoplasm. It carries out the reaction [ThiS sulfur-carrier protein]-C-terminal-Gly-aminoethanethioate + 2-iminoacetate + 1-deoxy-D-xylulose 5-phosphate = [ThiS sulfur-carrier protein]-C-terminal Gly-Gly + 2-[(2R,5Z)-2-carboxy-4-methylthiazol-5(2H)-ylidene]ethyl phosphate + 2 H2O + H(+). Its pathway is cofactor biosynthesis; thiamine diphosphate biosynthesis. Its function is as follows. Catalyzes the rearrangement of 1-deoxy-D-xylulose 5-phosphate (DXP) to produce the thiazole phosphate moiety of thiamine. Sulfur is provided by the thiocarboxylate moiety of the carrier protein ThiS. In vitro, sulfur can be provided by H(2)S. The sequence is that of Thiazole synthase from Escherichia coli O81 (strain ED1a).